The primary structure comprises 574 residues: ATP-dependent lipid A-core flippase (574 aa).

4 consecutive transmembrane segments (helical) span residues 11–31, 60–80, 156–176, and 244–264; these read LLSY…GFGI, WFPL…FMGG, YTNW…GVLV, and LNSP…VWLA. An ABC transmembrane type-1 domain is found at 23–304; sequence LLVLVGFGIN…LTDVNEKLQR (282 aa). Positions 335–570 constitute an ABC transporter domain; the sequence is VRFDHVTLEY…QGAYFQLHQR (236 aa). Position 368-375 (368-375) interacts with ATP; the sequence is GRSGAGKT.

Belongs to the ABC transporter superfamily. Lipid exporter (TC 3.A.1.106) family. Homodimer.

Its subcellular location is the cell inner membrane. The enzyme catalyses ATP + H2O + lipid A-core oligosaccharideSide 1 = ADP + phosphate + lipid A-core oligosaccharideSide 2.. Functionally, involved in lipopolysaccharide (LPS) biosynthesis. Translocates lipid A-core from the inner to the outer leaflet of the inner membrane. Transmembrane domains (TMD) form a pore in the inner membrane and the ATP-binding domain (NBD) is responsible for energy generation. This Acinetobacter baylyi (strain ATCC 33305 / BD413 / ADP1) protein is ATP-dependent lipid A-core flippase.